The following is a 63-amino-acid chain: Putative transmembrane protein ORF63 (63 aa).

Residues M1–L8 lie on the Extracellular side of the membrane. A helical membrane pass occupies residues E9–V29. The Cytoplasmic segment spans residues N30–P31. Residues S32–F52 form a helical membrane-spanning segment. The Extracellular segment spans residues H53–G63.

It localises to the host membrane. The polypeptide is Putative transmembrane protein ORF63 (Acidianus filamentous virus 1 (isolate United States/Yellowstone) (AFV-1)).